A 990-amino-acid polypeptide reads, in one-letter code: Importin beta-like protein kap111 (990 aa).

It belongs to the importin beta family.

Its subcellular location is the nucleus. Its function is as follows. Functions as a component of the nuclear pore complex (NPC). NPC components, collectively referred to as nucleoporins (NUPs), can play the role of both NPC structural components and of docking or interaction partners for transiently associated nuclear transport factors. Active directional transport is assured by both, a Phe-Gly (FG) repeat affinity gradient for these transport factors across the NPC and a transport cofactor concentration gradient across the nuclear envelope. This is Importin beta-like protein kap111 (kap111) from Schizosaccharomyces pombe (strain 972 / ATCC 24843) (Fission yeast).